We begin with the raw amino-acid sequence, 176 residues long: Transcription factor E (176 aa).

Residues 8–90 (EDPVIQKYLH…LWTFQYEKIP (83 aa)) enclose the HTH TFE/IIEalpha-type domain.

This sequence belongs to the TFE family. As to quaternary structure, monomer. Interaction with RNA polymerase subunits RpoF and RpoE is necessary for Tfe stimulatory transcription activity. Able to interact with Tbp and RNA polymerase in the absence of DNA promoter. Interacts both with the preinitiation and elongation complexes.

Functionally, transcription factor that plays a role in the activation of archaeal genes transcribed by RNA polymerase. Facilitates transcription initiation by enhancing TATA-box recognition by TATA-box-binding protein (Tbp), and transcription factor B (Tfb) and RNA polymerase recruitment. Not absolutely required for transcription in vitro, but particularly important in cases where Tbp or Tfb function is not optimal. It dynamically alters the nucleic acid-binding properties of RNA polymerases by stabilizing the initiation complex and destabilizing elongation complexes. Seems to translocate with the RNA polymerase following initiation and acts by binding to the non template strand of the transcription bubble in elongation complexes. In Haloarcula marismortui (strain ATCC 43049 / DSM 3752 / JCM 8966 / VKM B-1809) (Halobacterium marismortui), this protein is Transcription factor E.